The chain runs to 2479 residues: Centrosomal protein of 290 kDa (2479 aa).

Residues Met1 to Phe695 are self-association (with itself or C-terminus). 7 coiled-coil regions span residues Met59–Lys565, Ser598–Asp664, Ala697–Lys931, Ser958–Ala1027, Gln1071–Arg1498, His1533–Leu1584, and Asp1635–Leu2452. Residues Ala149 to Arg163 are compositionally biased toward basic and acidic residues. The disordered stretch occupies residues Ala149 to Arg168. The segment at Asp696 to Leu896 is interaction with IQCB1. Residues Thr1966–Tyr2479 are self-association (with itself or N-terminus). Residues Ser2458–Tyr2479 form a disordered region.

In terms of assembly, part of the tectonic-like complex (also named B9 complex). Interacts with ATF4 via its N-terminal region. Associates with the BBSome complex, interacting (via N-terminus) with BBS4. Interacts with IQCB1/NPHP5; IQCB1 and CEP290/NPHP6 are proposed to form a functional NPHP5-6 module localized to the centrosome. Interacts with NPHP4; the interaction likely requires additional interactors. Interacts with ZNF423, FAM161A, CEP162, CEP162, CEP131, TALPID3, CCDC13, CC2D2A, RPGRIP1. Can self-associate (homo- or heteromeric). Interacts with CCP110; required for suppressing cilia formation. Interacts with RPGR. Associates (via C-terminus) with microtubules; association to microtubule is reduced in response to cellular stress, such as ultraviolet light (UV) radiation or heat shock, in a process that requires p38 MAP kinase signaling. Interacts with FAM161A. Interacts with PCM1. Interacts with CCDC66. Interacts with ARMC9 and CSPP1. Ubiquitinated. May undergo monoubiquitination; monoubiquitination is inhibited in response to cellular stress, such as ultraviolet light (UV) radiation or heat shock, but does not cause its displacement from centriolar satellites. As to expression, ubiquitous. Expressed strongly in placenta and weakly in brain.

It localises to the cytoplasm. Its subcellular location is the cytoskeleton. The protein localises to the microtubule organizing center. It is found in the centrosome. The protein resides in the centriolar satellite. It localises to the nucleus. Its subcellular location is the cell projection. The protein localises to the cilium. It is found in the cilium basal body. The protein resides in the centriole. It localises to the cytoplasmic vesicle. Functionally, involved in early and late steps in cilia formation. Its association with CCP110 is required for inhibition of primary cilia formation by CCP110. May play a role in early ciliogenesis in the disappearance of centriolar satellites and in the transition of primary ciliar vesicles (PCVs) to capped ciliary vesicles (CCVs). Required for the centrosomal recruitment of RAB8A and for the targeting of centriole satellite proteins to centrosomes such as of PCM1. Required for the correct localization of ciliary and phototransduction proteins in retinal photoreceptor cells; may play a role in ciliary transport processes. Required for efficient recruitment of RAB8A to primary cilium. In the ciliary transition zone is part of the tectonic-like complex which is required for tissue-specific ciliogenesis and may regulate ciliary membrane composition. Involved in regulation of the BBSome complex integrity, specifically for presence of BBS2, BBS5 and BBS8/TTC8 in the complex, and in ciliary targeting of selected BBSome cargos. May play a role in controlling entry of the BBSome complex to cilia possibly implicating IQCB1/NPHP5. Activates ATF4-mediated transcription. The polypeptide is Centrosomal protein of 290 kDa (CEP290) (Homo sapiens (Human)).